A 361-amino-acid chain; its full sequence is Phosphoserine aminotransferase (361 aa).

Arginine 43 is a binding site for L-glutamate. Pyridoxal 5'-phosphate contacts are provided by residues 77–78 (AS), tryptophan 103, threonine 153, aspartate 173, and glutamine 196. At lysine 197 the chain carries N6-(pyridoxal phosphate)lysine. 238–239 (NT) lines the pyridoxal 5'-phosphate pocket.

Belongs to the class-V pyridoxal-phosphate-dependent aminotransferase family. SerC subfamily. Homodimer. Pyridoxal 5'-phosphate is required as a cofactor.

It is found in the cytoplasm. The catalysed reaction is O-phospho-L-serine + 2-oxoglutarate = 3-phosphooxypyruvate + L-glutamate. It carries out the reaction 4-(phosphooxy)-L-threonine + 2-oxoglutarate = (R)-3-hydroxy-2-oxo-4-phosphooxybutanoate + L-glutamate. It participates in amino-acid biosynthesis; L-serine biosynthesis; L-serine from 3-phospho-D-glycerate: step 2/3. The protein operates within cofactor biosynthesis; pyridoxine 5'-phosphate biosynthesis; pyridoxine 5'-phosphate from D-erythrose 4-phosphate: step 3/5. In terms of biological role, catalyzes the reversible conversion of 3-phosphohydroxypyruvate to phosphoserine and of 3-hydroxy-2-oxo-4-phosphonooxybutanoate to phosphohydroxythreonine. This is Phosphoserine aminotransferase from Pseudomonas fluorescens (strain SBW25).